Reading from the N-terminus, the 92-residue chain is uncharacterized protein (92 aa).

A run of 3 helical transmembrane segments spans residues 1 to 21 (MEVL…GVIL), 29 to 49 (IIML…CYYL), and 51 to 71 (IAIV…LGYL).

The protein resides in the cell membrane. This is an uncharacterized protein from Methanocaldococcus jannaschii (strain ATCC 43067 / DSM 2661 / JAL-1 / JCM 10045 / NBRC 100440) (Methanococcus jannaschii).